The following is a 1081-amino-acid chain: Serine/threonine-protein kinase PKH2 (1081 aa).

Residue Ser-138 is modified to Phosphoserine. The Protein kinase domain occupies 179–443 (FKFGSVIGDG…ISQIKEHHFF (265 aa)). ATP contacts are provided by residues 189–191 (AYS) and Lys-208. The segment at 210 to 255 (LNKEYLIRQKKVKYVSIEKTALQKLNNSPSVVRLFSTFQDESSLYF) is PIF-pocket. Residues 258-260 (EYA) and Asp-264 each bind ATP. Asp-303 functions as the Proton acceptor in the catalytic mechanism. ATP is bound by residues Glu-307 and Asp-321. Residues 494–526 (HLVTQRSASSPSVEETTHSTLYNNNTHASTESE) show a composition bias toward polar residues. 3 disordered regions span residues 494–652 (HLVT…TYQM), 805–833 (NRSGEGYKCNQNSSPMKDDDKSESNNKGS), and 970–1017 (IERR…INSA). The segment covering 527-538 (ISIKKRPTDERT) has biased composition (basic and acidic residues). Composition is skewed to low complexity over residues 564-575 (AASAALAASAAL) and 582-602 (SYPTSSSKSSRSSSPATTSRP). Residue Ser-619 is modified to Phosphoserine. The span at 632–645 (PMPPYTPPMSPPMT) shows a compositional bias: pro residues. Composition is skewed to polar residues over residues 805–819 (NRSGEGYKCNQNSSP) and 998–1017 (HSQSPSISKHNSFSESINSA). Residue Ser-1009 is modified to Phosphoserine.

This sequence belongs to the protein kinase superfamily. AGC Ser/Thr protein kinase family. PDPK1 subfamily.

Its subcellular location is the nucleus. It localises to the cytoplasm. The protein localises to the cell cortex. It carries out the reaction L-seryl-[protein] + ATP = O-phospho-L-seryl-[protein] + ADP + H(+). It catalyses the reaction L-threonyl-[protein] + ATP = O-phospho-L-threonyl-[protein] + ADP + H(+). With respect to regulation, sphingoid base activates kinase activity. Serine/threonine-protein kinase which is part sphingolipid-mediated signaling pathway that is required for the internalization step of endocytosis by regulating eisosome assembly and organization, and modulating the organization of the plasma membrane. Phosphorylates and activates PKC1. Activates YPK1 and YPK2, 2 components of signaling cascade required for maintenance of cell wall integrity. Required for stress-induced P-body assembly and regulates global mRNA decay at the deadenylation step. The protein is Serine/threonine-protein kinase PKH2 (PKH2) of Saccharomyces cerevisiae (strain ATCC 204508 / S288c) (Baker's yeast).